A 253-amino-acid polypeptide reads, in one-letter code: 5'/3'-nucleotidase SurE (253 aa).

Asp8, Asp9, Ser39, and Asn92 together coordinate a divalent metal cation.

Belongs to the SurE nucleotidase family. A divalent metal cation is required as a cofactor.

The protein resides in the cytoplasm. It carries out the reaction a ribonucleoside 5'-phosphate + H2O = a ribonucleoside + phosphate. It catalyses the reaction a ribonucleoside 3'-phosphate + H2O = a ribonucleoside + phosphate. The catalysed reaction is [phosphate](n) + H2O = [phosphate](n-1) + phosphate + H(+). In terms of biological role, nucleotidase with a broad substrate specificity as it can dephosphorylate various ribo- and deoxyribonucleoside 5'-monophosphates and ribonucleoside 3'-monophosphates with highest affinity to 3'-AMP. Also hydrolyzes polyphosphate (exopolyphosphatase activity) with the preference for short-chain-length substrates (P20-25). Might be involved in the regulation of dNTP and NTP pools, and in the turnover of 3'-mononucleotides produced by numerous intracellular RNases (T1, T2, and F) during the degradation of various RNAs. This chain is 5'/3'-nucleotidase SurE, found in Escherichia coli O17:K52:H18 (strain UMN026 / ExPEC).